A 293-amino-acid chain; its full sequence is Germ cell-specific gene 1-like protein 2 (293 aa).

Over 1-8 the chain is Cytoplasmic; the sequence is MDRAKQQQ. A helical transmembrane segment spans residues 9-29; sequence ALLLLPVCLALTFSLTAVVSS. Residues 30–120 lie on the Extracellular side of the membrane; the sequence is HWCEGTRRVV…RSVVPAEEQG (91 aa). Residues N59 and N67 are each glycosylated (N-linked (GlcNAc...) asparagine). The chain crosses the membrane as a helical span at residues 121–141; it reads VLWLSIGGEVLDIVLILTSAI. Over 142–160 the chain is Cytoplasmic; the sequence is LLGSRVSCRSPGFHWLRVD. The helical transmembrane segment at 161-181 threads the bilayer; it reads ALVAIFMVLAGLLGMVAHMMY. The Extracellular portion of the chain corresponds to 182–204; the sequence is TTIFQITVNLGPEDWKPQTWDYG. A helical membrane pass occupies residues 205–225; it reads WSYCLAWGSFALCLAVSVSAM. Topologically, residues 226 to 293 are cytoplasmic; that stretch reads SRFTAARLEF…PGAPGKVSIC (68 aa).

It belongs to the GSG1 family.

It localises to the membrane. This Homo sapiens (Human) protein is Germ cell-specific gene 1-like protein 2.